The sequence spans 554 residues: Valerianol synthase TPS1C (554 aa).

Mg(2+)-binding residues include Asp307 and Asp311. A DDXXD motif motif is present at residues 326–330 (VQRWD). Asp452, Ser456, and Glu460 together coordinate Mg(2+).

It belongs to the terpene synthase family. The cofactor is Mg(2+).

The catalysed reaction is (2E,6E)-farnesyl diphosphate + H2O = valerianol + diphosphate. Its pathway is secondary metabolite biosynthesis; terpenoid biosynthesis. Functionally, terpene synthase that catalyzes the biosynthesis of the terpene valerianol, which is a volatile compound of floral scent. This chain is Valerianol synthase TPS1C, found in Camellia hiemalis (Camellia).